Consider the following 226-residue polypeptide: Large ribosomal subunit protein uL1 (226 aa).

This sequence belongs to the universal ribosomal protein uL1 family. In terms of assembly, part of the 50S ribosomal subunit.

In terms of biological role, binds directly to 23S rRNA. The L1 stalk is quite mobile in the ribosome, and is involved in E site tRNA release. Protein L1 is also a translational repressor protein, it controls the translation of the L11 operon by binding to its mRNA. The chain is Large ribosomal subunit protein uL1 from Mycoplasma pneumoniae (strain ATCC 29342 / M129 / Subtype 1) (Mycoplasmoides pneumoniae).